We begin with the raw amino-acid sequence, 463 residues long: Asparagine--tRNA ligase (463 aa).

This sequence belongs to the class-II aminoacyl-tRNA synthetase family. In terms of assembly, homodimer.

The protein resides in the cytoplasm. It carries out the reaction tRNA(Asn) + L-asparagine + ATP = L-asparaginyl-tRNA(Asn) + AMP + diphosphate + H(+). The sequence is that of Asparagine--tRNA ligase from Clostridium novyi (strain NT).